The chain runs to 810 residues: Plasminogen (810 aa).

Residues 1–19 (MEHKEVVLLLLLFLKSGQG) form the signal peptide. Positions 20–98 (EPLDDYVNTQ…RDVVLFEKKV (79 aa)) constitute a PAN domain. 12 disulfide bridges follow: C49/C73, C53/C61, C103/C181, C124/C164, C152/C176, C185/C262, C188/C316, C206/C245, C234/C257, C275/C352, C296/C335, and C324/C347. 2 Kringle domains span residues 103–181 (CKTG…ILEC) and 184–262 (ECMH…IPRC). The segment at 126–145 (KWSSTSPHRPRFSPATHPSE) is disordered. R136, D158, and R172 together coordinate L-lysine. The O-linked (GalNAc...) serine glycan is linked to S268. Positions 275–352 (CLKGTGENYR…RWEYCKIPSC (78 aa)) constitute a Kringle 3 domain. N-linked (GlcNAc...) asparagine glycosylation occurs at N308. An O-linked (GalNAc...) threonine glycan is attached at T365. Intrachain disulfides connect C377/C454, C398/C437, C426/C449, C481/C560, C502/C543, C531/C555, C567/C685, C577/C585, and C607/C623. Kringle domains follow at residues 377-454 (CYHG…LKKC) and 481-560 (CMFG…VPQC). The tract at residues 396 to 416 (KKCQSWSSMTPHRHQKTPENY) is disordered. L-lysine contacts are provided by D432 and R445. The 228-residue stretch at 581-808 (VVGGCVAHPH…FVTWIEGVMR (228 aa)) folds into the Peptidase S1 domain. The residue at position 597 (S597) is a Phosphoserine. Catalysis depends on charge relay system residues H622 and D665. The residue at position 688 (S688) is a Phosphoserine. 3 disulfides stabilise this stretch: C699–C766, C729–C745, and C756–C784. The Charge relay system role is filled by S760.

It belongs to the peptidase S1 family. Plasminogen subfamily. Interacts (both mature PLG and the angiostatin peptide) with CSPG4 and AMOT. Interacts (via the Kringle domains) with HRG; the interaction tethers PLG to the cell surface and enhances its activation. Interacts (via Kringle 4 domain) with ADA; the interaction stimulates PLG activation when in complex with DPP4. Angiostatin: Interacts with ATP5F1A; the interaction inhibits most of the angiogenic effects of angiostatin. Interacts (plasmin) with iripin-8, a serine protease inhibitor from Ixodes ricinus saliva. Interacts (plasmin) with iripin-1, a serine protease inhibitor from Ixodes ricinus saliva. Interacts (plasmin) with Kazal-type trypsin inhibitor, a serine protease inhibitor from Aedes aegypti. As to quaternary structure, (Microbial infection) Interacts with C.albicans GPD2; the interaction is direct and provides active plasmin on the surface of fungal cells. In terms of assembly, (Microbial infection) Interacts with Staphylococcus aureus protein FnbB; this interaction provides active plasmin on the surface of bacterial cells. (Microbial infection) Interacts with P.falciparum (strain NF54) enolase ENO (via DKSLVK motif); the interaction occurs at the ookinete cell surface and is required for ookinete invasion of the mosquito midgut. As to quaternary structure, (Microbial infection) Interacts with B.burgdorferi OspC. Post-translationally, N-linked glycan contains N-acetyllactosamine and sialic acid. O-linked glycans consist of Gal-GalNAc disaccharide modified with up to 2 sialic acid residues (microheterogeneity). In the presence of the inhibitor, the activation involves only cleavage after Arg-580, yielding two chains held together by two disulfide bonds. In the absence of the inhibitor, the activation involves additionally the removal of the activation peptide. In terms of processing, (Microbial infection) The Y.pestis Pla protein cleaves between Arg-580 and Val-581, generating plasmin which facilitates bacterial migration and infection. As to expression, present in plasma and many other extracellular fluids. It is synthesized in the liver.

Its subcellular location is the secreted. The catalysed reaction is Preferential cleavage: Lys-|-Xaa &gt; Arg-|-Xaa, higher selectivity than trypsin. Converts fibrin into soluble products.. With respect to regulation, converted into plasmin by plasminogen activators, both plasminogen and its activator being bound to fibrin. Activated with catalytic amounts of streptokinase. Plasmin activity inhibited by SERPINE2. Its function is as follows. Plasmin dissolves the fibrin of blood clots and acts as a proteolytic factor in a variety of other processes including embryonic development, tissue remodeling, tumor invasion, and inflammation. In ovulation, weakens the walls of the Graafian follicle. It activates the urokinase-type plasminogen activator, collagenases and several complement zymogens, such as C1, C4 and C5. Cleavage of fibronectin and laminin leads to cell detachment and apoptosis. Also cleaves fibrin, thrombospondin and von Willebrand factor. Its role in tissue remodeling and tumor invasion may be modulated by CSPG4. Binds to cells. Functionally, angiostatin is an angiogenesis inhibitor that blocks neovascularization and growth of experimental primary and metastatic tumors in vivo. (Microbial infection) ENO/enoloase from parasite P.falciparum (strain NF54) interacts with PLG present in the mosquito blood meal to promote the invasion of the mosquito midgut by the parasite ookinete. The catalytic active form, plasmin, is essential for the invasion of the mosquito midgut. In terms of biological role, (Microbial infection) Binds to OspC on the surface of B.burgdorferi cells, possibly conferring an extracellular protease activity on the bacteria that allows it to traverse host tissue. Its function is as follows. (Microbial infection) Interacts with dengue virus type 2 particles. Enhances dengue virus type 2 infection in Aedes aegypti mosquito midgut by increasing midgut internalization, resulting in higher infection rates and viral dissemination in mosquitoes. The protein is Plasminogen (PLG) of Homo sapiens (Human).